Reading from the N-terminus, the 337-residue chain is MNLLPFDEQKPLDFIAVGRLCIDLNANEIHRPMEETVTFTKYVGGSPANIAIGMARLGMKTGFIGRVADDQMGRFIVQYLKNNGIDTSHVITDKSGSVTGLAFTEIKSPTDCSILMYRDNVADLKLEPNDIHEDYIRQAKCLLISGTALAKSPSREAVFLALEYARRHGVVVFFDLDYRPYTWQSKEETAIYYNLAAEKCDVIIGTREEFDMMEQFAVHQHDDEKTAQKWFDYHAKIVVIKHGKDGSIAYTKTGETFVGTIFPANIVKTFGAGDSYAAGFIYGLMNGWPIPKAMEYGAAAASIVISSHSCSDAMPTLDQIEQFIQHIKAARPLQNHK.

It belongs to the carbohydrate kinase PfkB family.

The enzyme catalyses 5-dehydro-2-deoxy-D-gluconate + ATP = 6-phospho-5-dehydro-2-deoxy-D-gluconate + ADP + H(+). Its pathway is polyol metabolism; myo-inositol degradation into acetyl-CoA; acetyl-CoA from myo-inositol: step 5/7. Its function is as follows. Catalyzes the phosphorylation of 5-dehydro-2-deoxy-D-gluconate (2-deoxy-5-keto-D-gluconate or DKG) to 6-phospho-5-dehydro-2-deoxy-D-gluconate (DKGP). This Geobacillus thermodenitrificans (strain NG80-2) protein is 5-dehydro-2-deoxygluconokinase.